A 488-amino-acid polypeptide reads, in one-letter code: MSAIQSPAPKPLQPTYPAASPASTNAYMKPGLIGSPAVSNHTEPNNGNNETAEPQGPNQRIDLGAMIEELTSLLGKESWTKYAQIISLFILGKLSRKELSNELELVFSPSAASLEKSNTNHHHSLVRLHNQLLLGIFANSLRENPLGRNGNESSWGFGNGSNNPNNKLKRINKHNSQIEVYKKIVMSLPLNDRNRLKMITKEAGKRGFIFCSVFQARLNNIPKIPIVTNPESLKRVKSNNLKTPLEWSQDIMNGFNVPLASESHSLPDTDSFYLRMVGIAREHGLVGTVDARCVELISLALDQYLKNIIEFTIDTVRYRRKKYSDYYDLNESGLYKSVSEMAADKRDAKIKQLDDDKNEDECADEAKSINNGNNSSKDDIGDISMSSITKAGEAVNEELHENRTISLTNEDIYDSLSIFPNLVEPSGSYYALTNLGLVNDDELVDMKSNIDDLPDFLNEKPTFTPLDERNVGTRHELNWLIKGILTED.

Disordered stretches follow at residues 1 to 58 (MSAI…QGPN) and 352 to 383 (QLDD…IGDI). Over residues 37-58 (AVSNHTEPNNGNNETAEPQGPN) the composition is skewed to polar residues.

As to quaternary structure, component of the 1.8 MDa SAGA (Spt-Ada-Gcn5 acetyltransferase) complex, which is composed of 19 subunits TRA1, SPT7, TAF5, NGG1/ADA3, SGF73, SPT20/ADA5, SPT8, TAF12, TAF6, HFI1/ADA1, UBP8, GCN5, ADA2, SPT3, SGF29, TAF10, TAF9, SGF11 and SUS1. The SAGA complex is composed of 4 modules, namely the HAT (histone acetyltransferase) module (GCN5, ADA2, NGG1/ADA3 and SGF29), the DUB (deubiquitinating) module (UBP8, SGF11, SGF73 and SUS1), the core or TAF (TBP-associated factor) module (TAF5, TAF6, TAF9, TAF10 and TAF12), and the Tra1 or SPT (Suppressor of Ty) module (TRA1, HFI1/ADA1, SPT3, SPT7, SPT8 and SPT20/ADA5). The Tra1/SPT module binds activators, the core module recruits TBP (TATA-binding protein), the HAT module contains the histone H3 acetyltransferase GCN5, and the DUB module comprises the histone H2B deubiquitinase UBP8. Also identified in an altered form of SAGA, named SALSA (SAGA altered, Spt8 absent) or SLIK (SAGA-like) complex, which contains a C-terminal truncated form of SPT7 and is missing SPT8. However, it has been shown that the SAGA and SAGA-like SALSA/SLIK transcriptional coactivators are structurally and biochemically equivalent. Component of an ADA/GCN5 complex that consists of HFI1/ADA1, ADA2, NGG1/ADA3, SPT20/ADA5 and GCN5 and probably is a subcomplex of SAGA.

The protein localises to the nucleus. Functionally, component of the transcription coactivator SAGA complex. SAGA acts as a general cofactor required for essentially all RNA polymerase II transcription. At the promoters, SAGA is required for transcription pre-initiation complex (PIC) recruitment. It influences RNA polymerase II transcriptional activity through different activities such as TBP interaction (via core/TAF module) and promoter selectivity, interaction with transcription activators (via Tra1/SPT module), and chromatin modification through histone acetylation (via HAT module) and deubiquitination (via DUB module). SAGA preferentially acetylates histones H3 (to form H3K9ac, H3K14ac, H3K18ac and H3K23ac) and H2B and deubiquitinates histone H2B. SAGA interacts with DNA via upstream activating sequences (UASs). Also identified in a modified version of SAGA named SALSA or SLIK. The cleavage of SPT7 and the absence of the SPT8 subunit in SLIK neither drive any major conformational differences in its structure compared with SAGA, nor significantly affect HAT, DUB, or DNA-binding activities. This chain is SAGA complex subunit HFI1 (HFI1), found in Saccharomyces cerevisiae (strain ATCC 204508 / S288c) (Baker's yeast).